The sequence spans 344 residues: Axoneme-associated protein mst101(1) (344 aa).

12 consecutive repeat copies span residues 74–89, 90–105, 106–121, 122–137, 138–153, 154–169, 170–185, 186–201, 202–217, 218–233, 234–249, and 250–265. The 17 X 16 AA approximate tandem repeats of K-K-K-C-X-E-X-A-[KQ]-K-X-X-E-X-A-X stretch occupies residues 74 to 344; it reads KKKCAEAAKK…AAQKKCEPKK (271 aa). A disordered region spans residues 206–244; sequence KEAAEKKKCEERAKKEKEAAEKKKCEERAKKEKEAAEKK. A 13; approximate repeat occupies 266-281; the sequence is AQKKKCAELAKKAKEA. A 14; approximate repeat occupies 282 to 297; the sequence is AEKKKCAKKAGEKGSK. The span at 285–315 shows a compositional bias: basic and acidic residues; the sequence is KKCAKKAGEKGSKQSGSDKGKKNGKKNDMKN. Residues 285–318 are disordered; the sequence is KKCAKKAGEKGSKQSGSDKGKKNGKKNDMKNKCA. The stretch at 298 to 313 is one 15; approximate repeat; sequence QSGSDKGKKNGKKNDM. Residues 314–329 form repeat 16; it reads KNKCAMLAKKAKEEAL. The stretch at 330–344 is one 17; truncated repeat; it reads KKKCAAAQKKCEPKK.

In terms of tissue distribution, testis. Located in spermatocytes and spermatid bundles.

It is found in the cytoplasm. Functionally, possible structural role in the sperm tail. It is associated with axonemal structures. This is Axoneme-associated protein mst101(1) (mst101(1)) from Drosophila hydei (Fruit fly).